Here is a 346-residue protein sequence, read N- to C-terminus: Elongation factor Ts (346 aa).

Residues 80-83 (TDFV) form an involved in Mg(2+) ion dislocation from EF-Tu region.

The protein belongs to the EF-Ts family.

The protein localises to the cytoplasm. Associates with the EF-Tu.GDP complex and induces the exchange of GDP to GTP. It remains bound to the aminoacyl-tRNA.EF-Tu.GTP complex up to the GTP hydrolysis stage on the ribosome. This is Elongation factor Ts from Streptococcus pneumoniae (strain 70585).